We begin with the raw amino-acid sequence, 814 residues long: Telomere repeats-binding bouquet formation protein 1 (814 aa).

ARM repeat units lie at residues 93-136 (EMFR…KTSR) and 327-368 (GGLP…GMST). Disordered stretches follow at residues 461 to 521 (DQDS…ELKR), 551 to 584 (STPT…LSDD), and 653 to 753 (FRRS…KRQN). The stretch at 488–512 (EKSKKRKHKQKRENERSDNQETRRE) forms a coiled coil. 3 stretches are compositionally biased toward basic and acidic residues: residues 499-521 (RENE…ELKR), 565-577 (IFRH…RNQR), and 679-688 (EHSTSAQEHK). The segment covering 689–699 (QKSKREKHKLS) has biased composition (basic residues). Basic and acidic residues predominate over residues 714–741 (RPRETYSPDVKQWTDHRHLKKSSEDARS). The Myb-like domain occupies 746-799 (GRHRKRQNWSDKELCYLTKGVKRFGHSWNTILWKYPFHPGRTNVDLAKKFYHMQ).

This sequence belongs to the TERB1 family. Component of the MAJIN-TERB1-TERB2 complex.

The protein localises to the chromosome. The protein resides in the telomere. Its subcellular location is the nucleus inner membrane. In terms of biological role, meiosis-specific telomere-associated protein involved in meiotic telomere attachment to the nucleus inner membrane, a crucial step for homologous pairing and synapsis. Component of the MAJIN-TERB1-TERB2 complex, which promotes telomere cap exchange by mediating attachment of telomeric DNA to the inner nuclear membrane and replacement of the protective cap of telomeric chromosomes: in early meiosis, the MAJIN-TERB1-TERB2 complex associates with telomeric DNA and the shelterin/telosome complex. During prophase, the complex matures and promotes release of the shelterin/telosome complex from telomeric DNA. In the MAJIN-TERB1-TERB2 complex, TERB1 probably mediates association with the shelterin/telosome complex. The protein is Telomere repeats-binding bouquet formation protein 1 (ccdc79) of Danio rerio (Zebrafish).